A 116-amino-acid polypeptide reads, in one-letter code: Ly-6/neurotoxin-like protein 1 (116 aa).

The signal sequence occupies residues 1–20; it reads MTPLLTLILVVLMGLPLAQA. In terms of domain architecture, UPAR/Ly6 spans 21-105; sequence LDCHVCAYNG…LATPATLALA (85 aa). 5 cysteine pairs are disulfide-bonded: cysteine 23-cysteine 46, cysteine 26-cysteine 33, cysteine 39-cysteine 64, cysteine 68-cysteine 85, and cysteine 86-cysteine 91. A lipid anchor (GPI-anchor amidated asparagine) is attached at asparagine 92. Residues 93–116 constitute a propeptide, removed in mature form; it reads GAGLATPATLALAPILLATLWGLL.

In terms of assembly, interacts with nAChRs containing alpha-4:beta-2 (CHRNA4:CHRNB2) and alpha-7 (CHRNA7) subunits. Interacts with CHRNA4 probably in the endoplasmic reticulum prior to nAChR pentameric assembly. Interacts with KCNA2/Potassium voltage-gated channel subfamily A member 2.

The protein resides in the cell membrane. It is found in the cell projection. It localises to the dendrite. The protein localises to the endoplasmic reticulum. Functionally, acts in different tissues through interaction to nicotinic acetylcholine receptors (nAChRs). The proposed role as modulator of nAChR activity seems to be dependent on the nAChR subtype and stoichiometry, and to involve an effect on nAChR trafficking and its cell surface expression, and on single channel properties of the nAChR inserted in the plasma membrane. Modulates functional properties of nicotinic acetylcholine receptors (nAChRs) to prevent excessive excitation, and hence neurodegeneration. Enhances desensitization by increasing both the rate and extent of desensitization of alpha-4:beta-2-containing nAChRs and slowing recovery from desensitization. Promotes large amplitude ACh-evoked currents through alpha-4:beta-2 nAChRs. Is involved in regulation of the nAChR pentameric assembly in the endoplasmic reticulum. Shifts stoichiometry from high sensitivity alpha-4(2):beta-2(3) to low sensitivity alpha-4(3):beta-2(2) nAChR. In vitro modulates alpha-3:beta-4-containing nAChRs. Reduces cell surface expression of (alpha-3:beta-4)(2):beta-4 and (alpha-3:beta-4)(2):alpha-5 nAChRs suggesting an interaction with nAChR alpha-3(-):(+)beta-4 subunit interfaces and an allosteric mode. Corresponding single channel effects characterized by decreased unitary conductance, altered burst proportions and enhanced desensitization/inactivation seem to depend on nAChR alpha:alpha subunit interfaces and are greater in (alpha-3:beta-2)(2):alpha-3 when compared to (alpha-3:beta-2)(2):alpha-5 nAChRs. Prevents plasticity in the primary visual cortex late in life. The sequence is that of Ly-6/neurotoxin-like protein 1 from Pan troglodytes (Chimpanzee).